The primary structure comprises 345 residues: Protein-glutamate methylesterase/protein-glutamine glutaminase (345 aa).

One can recognise a Response regulatory domain in the interval 5–123 (KVIVVDDSVL…ELSKMKDDLI (119 aa)). Residue D56 is modified to 4-aspartylphosphate. Positions 153-343 (SSDSIEAVVI…DEIIKIVRGL (191 aa)) constitute a CheB-type methylesterase domain. Residues S165, H192, and D285 contribute to the active site.

Belongs to the CheB family. In terms of processing, phosphorylated by CheA. Phosphorylation of the N-terminal regulatory domain activates the methylesterase activity.

It is found in the cytoplasm. The catalysed reaction is [protein]-L-glutamate 5-O-methyl ester + H2O = L-glutamyl-[protein] + methanol + H(+). The enzyme catalyses L-glutaminyl-[protein] + H2O = L-glutamyl-[protein] + NH4(+). Its function is as follows. Involved in chemotaxis. Part of a chemotaxis signal transduction system that modulates chemotaxis in response to various stimuli. Catalyzes the demethylation of specific methylglutamate residues introduced into the chemoreceptors (methyl-accepting chemotaxis proteins or MCP) by CheR. Also mediates the irreversible deamidation of specific glutamine residues to glutamic acid. The polypeptide is Protein-glutamate methylesterase/protein-glutamine glutaminase (Clostridium acetobutylicum (strain ATCC 824 / DSM 792 / JCM 1419 / IAM 19013 / LMG 5710 / NBRC 13948 / NRRL B-527 / VKM B-1787 / 2291 / W)).